The sequence spans 333 residues: Glycogenin-1 (333 aa).

T2 bears the N-acetylthreonine mark. UDP-binding residues include L9, T11, N12, and Y15. Residues L9, T11, N12, and Y15 each coordinate UDP-alpha-D-glucose. Residue S44 is modified to Phosphoserine; by PKA; in vitro. UDP is bound at residue R77. UDP-alpha-D-glucose-binding residues include R77, K86, D102, A103, D104, N133, S134, D160, D163, and Q164. Residues D102, A103, and D104 each contribute to the UDP site. D102 is a binding site for Mn(2+). D104 provides a ligand contact to Mn(2+). An O-linked (Glc...) tyrosine glycan is attached at Y195. UDP-binding residues include H212, G215, and K218. H212 serves as a coordination point for Mn(2+). UDP-alpha-D-glucose contacts are provided by G215 and K218. Residues 284-316 (SHLSLGETPATTQPFVSSEERKERWEQGQADYM) form an interaction with GYS1 region.

It belongs to the glycosyltransferase 8 family. Glycogenin subfamily. As to quaternary structure, part of the GYS1-GYG1 complex, a heterooctamer composed of a tetramer of GYS1 and 2 dimers of GYG1, where each GYS1 protomer binds to one GYG1 subunit (via GYG1 C-terminus); the GYS1 tetramer may dissociate from GYG1 dimers to continue glycogen polymerization on its own. May also form a heterooctamer complex with GYS2 (via GYG1 C-terminus). It depends on Mn(2+) as a cofactor. Post-translationally, self-glycosylated by the transfer of glucose residues from UDP-glucose to itself, forming an alpha-1,4-glycan of around 10 residues attached to Tyr-195. In terms of processing, phosphorylated. Detected in heart, skeletal muscle, brain and testis, and at lower levels in kidney.

Its subcellular location is the cytoplasm. The protein resides in the nucleus. It carries out the reaction L-tyrosyl-[glycogenin] + UDP-alpha-D-glucose = alpha-D-glucosyl-L-tyrosyl-[glycogenin] + UDP + H(+). The enzyme catalyses [1,4-alpha-D-glucosyl](n)-L-tyrosyl-[glycogenin] + UDP-alpha-D-glucose = [1,4-alpha-D-glucosyl](n+1)-L-tyrosyl-[glycogenin] + UDP + H(+). It participates in glycan biosynthesis; glycogen biosynthesis. Its function is as follows. Glycogenin participates in the glycogen biosynthetic process along with glycogen synthase and glycogen branching enzyme. It catalyzes the formation of a short alpha (1,4)-glucosyl chain covalently attached via a glucose 1-O-tyrosyl linkage to internal tyrosine residues and these chains act as primers for the elongation reaction catalyzed by glycogen synthase. This is Glycogenin-1 (GYG1) from Oryctolagus cuniculus (Rabbit).